A 321-amino-acid chain; its full sequence is Mitochondrial thiamine pyrophosphate carrier 1 (321 aa).

Solcar repeat units follow at residues 12–110, 121–207, and 216–311; these read GSRQ…ISQM, PSSA…LKPV, and PLGS…AMGI. Helical transmembrane passes span 17-38, 91-107, 127-147, 182-199, 213-231, and 286-303; these read VVVA…LDVI, LLYL…YTNI, FISG…LDLL, GLGA…LFFA, LPLP…ASVV, and GLTV…VTMW.

It belongs to the mitochondrial carrier (TC 2.A.29) family.

The protein localises to the mitochondrion inner membrane. Its function is as follows. Mitochondrial transporter that mediates uptake of thiamine pyrophosphate (ThPP) into mitochondria. The protein is Mitochondrial thiamine pyrophosphate carrier 1 (TPC1) of Phaeosphaeria nodorum (strain SN15 / ATCC MYA-4574 / FGSC 10173) (Glume blotch fungus).